We begin with the raw amino-acid sequence, 320 residues long: o-succinylbenzoate synthase (320 aa).

Lys133 functions as the Proton donor in the catalytic mechanism. Mg(2+) is bound by residues Asp161, Glu190, and Asp213. The active-site Proton acceptor is the Lys235.

The protein belongs to the mandelate racemase/muconate lactonizing enzyme family. MenC type 1 subfamily. A divalent metal cation is required as a cofactor.

It carries out the reaction (1R,6R)-6-hydroxy-2-succinyl-cyclohexa-2,4-diene-1-carboxylate = 2-succinylbenzoate + H2O. The protein operates within quinol/quinone metabolism; 1,4-dihydroxy-2-naphthoate biosynthesis; 1,4-dihydroxy-2-naphthoate from chorismate: step 4/7. It participates in quinol/quinone metabolism; menaquinone biosynthesis. Functionally, converts 2-succinyl-6-hydroxy-2,4-cyclohexadiene-1-carboxylate (SHCHC) to 2-succinylbenzoate (OSB). This Salmonella paratyphi C (strain RKS4594) protein is o-succinylbenzoate synthase.